Here is a 649-residue protein sequence, read N- to C-terminus: Pesticidal crystal protein Cry3Ca (649 aa).

A compositionally biased stretch (basic and acidic residues) spans 1–13 (MNPNNRSEHDTIK). Residues 1-29 (MNPNNRSEHDTIKATENNEVSNNHAQYPL) form a disordered region. Residues 14–25 (ATENNEVSNNHA) show a composition bias toward polar residues.

This sequence belongs to the delta endotoxin family.

In terms of biological role, promotes colloidosmotic lysis by binding to the midgut epithelial cells of Coleoptera. This chain is Pesticidal crystal protein Cry3Ca (cry3Ca), found in Bacillus thuringiensis subsp. kurstaki.